The sequence spans 406 residues: Argininosuccinate synthase (406 aa).

Residue Ala8–Ser16 coordinates ATP. Residue Tyr86 participates in L-citrulline binding. Residue Gly116 coordinates ATP. Thr118, Asn122, and Asp123 together coordinate L-aspartate. Asn122 contacts L-citrulline. Residues Arg126, Ser174, Glu259, and Tyr271 each contribute to the L-citrulline site.

Belongs to the argininosuccinate synthase family. Type 1 subfamily. Homotetramer.

It localises to the cytoplasm. The catalysed reaction is L-citrulline + L-aspartate + ATP = 2-(N(omega)-L-arginino)succinate + AMP + diphosphate + H(+). It functions in the pathway amino-acid biosynthesis; L-arginine biosynthesis; L-arginine from L-ornithine and carbamoyl phosphate: step 2/3. This is Argininosuccinate synthase from Lacticaseibacillus paracasei (strain ATCC 334 / BCRC 17002 / CCUG 31169 / CIP 107868 / KCTC 3260 / NRRL B-441) (Lactobacillus paracasei).